The sequence spans 244 residues: NAD(P)H-quinone oxidoreductase subunit K (244 aa).

The [4Fe-4S] cluster site is built by Cys-60, Cys-61, Cys-125, and Cys-156.

It belongs to the complex I 20 kDa subunit family. NDH-1 can be composed of about 15 different subunits; different subcomplexes with different compositions have been identified which probably have different functions. It depends on [4Fe-4S] cluster as a cofactor.

The protein localises to the cellular thylakoid membrane. It carries out the reaction a plastoquinone + NADH + (n+1) H(+)(in) = a plastoquinol + NAD(+) + n H(+)(out). The catalysed reaction is a plastoquinone + NADPH + (n+1) H(+)(in) = a plastoquinol + NADP(+) + n H(+)(out). Functionally, NDH-1 shuttles electrons from an unknown electron donor, via FMN and iron-sulfur (Fe-S) centers, to quinones in the respiratory and/or the photosynthetic chain. The immediate electron acceptor for the enzyme in this species is believed to be plastoquinone. Couples the redox reaction to proton translocation, and thus conserves the redox energy in a proton gradient. Cyanobacterial NDH-1 also plays a role in inorganic carbon-concentration. The chain is NAD(P)H-quinone oxidoreductase subunit K from Prochlorococcus marinus (strain MIT 9515).